The following is a 122-amino-acid chain: Semaphorin-like protein A43 (122 aa).

Positions 1-122 (MIYLYTADNV…RIMYLFYEYH (122 aa)) constitute a Sema domain.

The protein belongs to the semaphorin family.

This chain is Semaphorin-like protein A43 (A43R), found in Homo sapiens (Human).